The following is a 758-amino-acid chain: Deoxynucleotidyltransferase terminal-interacting protein 2 (758 aa).

The span at Met-1–Arg-21 shows a compositional bias: polar residues. Residues Met-1 to Glu-176 form a disordered region. 4 positions are modified to phosphoserine: Ser-17, Ser-133, Ser-137, and Ser-140. The span at Asp-128 to Ser-143 shows a compositional bias: low complexity. The segment covering Asn-155 to Val-172 has biased composition (polar residues). Phosphoserine is present on residues Ser-173 and Ser-183. Residue Lys-210 forms a Glycyl lysine isopeptide (Lys-Gly) (interchain with G-Cter in SUMO2) linkage. Phosphoserine occurs at positions 229, 240, 248, and 255. Residues Ala-231–Ser-255 show a composition bias toward polar residues. 4 disordered regions span residues Ala-231–Leu-277, Lys-312–Ser-353, Asp-377–Leu-480, and Asp-501–Ser-552. Lys-317 participates in a covalent cross-link: Glycyl lysine isopeptide (Lys-Gly) (interchain with G-Cter in SUMO2). Over residues Arg-321–Ser-353 the composition is skewed to polar residues. Residues Ser-324 and Ser-330 each carry the phosphoserine modification. Glycyl lysine isopeptide (Lys-Gly) (interchain with G-Cter in SUMO2) cross-links involve residues Lys-345 and Lys-384. Residues Asp-377 to Asp-387 are compositionally biased toward basic and acidic residues. Over residues Leu-431 to Ser-440 the composition is skewed to polar residues. Positions Ser-447–Ser-456 are enriched in low complexity. Phosphoserine occurs at positions 476 and 512. The stretch at Ser-512–Lys-541 forms a coiled coil. Residues Ala-515–Leu-550 are compositionally biased toward acidic residues. Residues Leu-550 to Gln-607 form a tdBR region; mediates interaction with DNTT region. Residues Lys-560, Lys-586, and Lys-608 each participate in a glycyl lysine isopeptide (Lys-Gly) (interchain with G-Cter in SUMO2) cross-link. Thr-612 bears the Phosphothreonine mark. Residues Val-621–Trp-647 form a disordered region. Lys-628 is covalently cross-linked (Glycyl lysine isopeptide (Lys-Gly) (interchain with G-Cter in SUMO2)). Basic residues predominate over residues Arg-630–Arg-639. Residues Lys-651, Lys-660, Lys-688, and Lys-733 each participate in a glycyl lysine isopeptide (Lys-Gly) (interchain with G-Cter in SUMO2) cross-link.

As to quaternary structure, forms a ternary complex with DNTT and core histone; interaction with PCNA releases DNTT and H2A/H2B histones from this ternary complex. Interacts with ESR1, ESR2, PPARG and RXRA. Part of the small subunit (SSU) processome, composed of more than 70 proteins and the RNA chaperone small nucleolar RNA (snoRNA) U3.

Its subcellular location is the nucleus. It is found in the nucleolus. Its function is as follows. Regulates the transcriptional activity of DNTT and ESR1. May function as a chromatin remodeling protein. Part of the small subunit (SSU) processome, first precursor of the small eukaryotic ribosomal subunit. During the assembly of the SSU processome in the nucleolus, many ribosome biogenesis factors, an RNA chaperone and ribosomal proteins associate with the nascent pre-rRNA and work in concert to generate RNA folding, modifications, rearrangements and cleavage as well as targeted degradation of pre-ribosomal RNA by the RNA exosome. This is Deoxynucleotidyltransferase terminal-interacting protein 2 (Dnttip2) from Mus musculus (Mouse).